The sequence spans 88 residues: Small ribosomal subunit protein uS17 (88 aa).

The protein belongs to the universal ribosomal protein uS17 family. As to quaternary structure, part of the 30S ribosomal subunit.

Functionally, one of the primary rRNA binding proteins, it binds specifically to the 5'-end of 16S ribosomal RNA. The protein is Small ribosomal subunit protein uS17 of Lactobacillus gasseri (strain ATCC 33323 / DSM 20243 / BCRC 14619 / CIP 102991 / JCM 1131 / KCTC 3163 / NCIMB 11718 / NCTC 13722 / AM63).